The primary structure comprises 267 residues: Cilia- and flagella-associated protein 300 (267 aa).

This sequence belongs to the CFAP300 family. In terms of assembly, interacts with DNAAF2. In terms of tissue distribution, expressed in the left-right organiser (LRO) node at 8.25 dpc.

Its subcellular location is the cytoplasm. It localises to the cytoskeleton. The protein localises to the cilium axoneme. Functionally, cilium- and flagellum-specific protein that plays a role in axonemal structure organization and motility. May play a role in outer and inner dynein arm assembly. The sequence is that of Cilia- and flagella-associated protein 300 from Mus musculus (Mouse).